A 92-amino-acid polypeptide reads, in one-letter code: Turripeptide UID-02 (92 aa).

A signal peptide spans 1–21 (MGFYMLLTVALLLTSLMNVEA). The propeptide occupies 22–39 (TPVDQAERSALEKSGLGN).

As to expression, expressed by the venom duct.

The protein localises to the secreted. The chain is Turripeptide UID-02 from Gemmula speciosa (Splendid gem-turris).